A 337-amino-acid polypeptide reads, in one-letter code: MALARWLWVVAGLVVTIVAIGGITRLTESGLSITHWSVVSGILPPLSESAWQAEFDLYRQTGEYRLESGPAGMDLAAFKFIYFWEWFHRILGRVIGLAFLLPMMWFWIRGMIPAGYRGRLLALFALICGQGALGWYMVASGVGTDLTDVSHFRLSAHLLTALFLLAGLVWTALDLRRLARVPDARPARFTGVAWMASIILFIQILLGAWVAGLNAGHASYSWPMMNGGLLPQPDLTRGWLWALTHDPFLLHFLHRWWAWVAVIALVVLARKVRPFDRRASIAVHSAFGTMVVLGIATVLSEVSLWIAVAHQLTGALLVISTAWAAHAIGTARKTEAA.

Helical transmembrane passes span 3-23 (LARW…IGGI), 94-114 (VIGL…MIPA), 120-140 (LLAL…MVAS), 154-174 (LSAH…TALD), 191-211 (GVAW…AWVA), 248-268 (FLLH…LVVL), and 289-309 (TMVV…IAVA). Histidine 254 is a binding site for heme. Histidine 310 is a binding site for heme. Residues 311–331 (QLTGALLVISTAWAAHAIGTA) traverse the membrane as a helical segment.

The protein belongs to the COX15/CtaA family. Type 2 subfamily. In terms of assembly, interacts with CtaB. Heme b is required as a cofactor.

It localises to the cell membrane. The catalysed reaction is Fe(II)-heme o + 2 A + H2O = Fe(II)-heme a + 2 AH2. It participates in porphyrin-containing compound metabolism; heme A biosynthesis; heme A from heme O: step 1/1. In terms of biological role, catalyzes the conversion of heme O to heme A by two successive hydroxylations of the methyl group at C8. The first hydroxylation forms heme I, the second hydroxylation results in an unstable dihydroxymethyl group, which spontaneously dehydrates, resulting in the formyl group of heme A. This chain is Heme A synthase, found in Erythrobacter litoralis (strain HTCC2594).